A 1357-amino-acid polypeptide reads, in one-letter code: MKRDFTFFCRIWIGIPFFSGLVNGFSMSPPTLDNTKDQLVINANDTLNITCRGQRILDWSWPEESLSKVEFTDRQGQQSPTDTPGYREIRLKECQGVAGKPYCKILILTNAQANDSGYYRCFYKDIKAVIDGTTAASIFVFVRDPEHPFIKRGDNDMETIFITDSETHIEVPCLVSDPDLKVTLFSLVPYPEPVDGSVVTWNNKKGWSIPRHIIQNTSTFIGFYCSISVQNSQHTSSIYVVQVIGLKFYEFKLFPEDSPVELMQGESLVLNCTALVDFNTGVDFQWDYPGKKENRLASLQPLRNVLDEATEISSILSIRNIHLDDSGYYTCWANTLEMKRELTTVVIVHEKPFISLDYRNGSVIEAKEGQKSVRLSVKVSAYPSPEIQWYKNGKLISSKNSSRFKVQQHSLQIRDVCKQDAGEYMLVLKNSPAALEKRLNFTLIVNVPPQIHEKEAAPPTNLYGKGTRQILTCTADGSPPASISWQWRPWSPCDLERTRRALRRRGGRDQSPFCHNWMDLDPEHAVNPIESIDTLTQMVDGKEKTVGRVVIQNASVPAMYKCLAENRVGKDERLIYFYVTTIPEGFDIEMEPSEDPLEQDLVQLKCNADNFTYENLRWYRLDPQTVPPELDCKSLHQYATFLEGQLSFQTTSNNWVLQLNITNIQLQDEGNYVCEVQNRRTGVKHCHRKYIPVKAMEAPRYRHNPTNHTVNVSESLQMNCDVEGTPFPQLSWFKDNQPLHQISGILLQDSNRTLSIQRVREEDAGLYTCSACNQKGCVQSSATVSVIGSDDKTNVEIVILIGTGVIAIFFWVLLLVIFCNVKRVNPADIKTGYLSIIMDPGEVPLEEQCEYLPYDSSQWEISRDRLRLGKVLGHGAFGKVIEASIFGHDKKSSANTVAVKMLKEGATASEHKALMSELKILIHIGNHLNVVNLLGACTKPNGPLMVIVEYCKYGNLSNFLRAKREFFLPYRDRSPKTQSQVRRMIEAGQASQSEHQPSTSSTNPPRVTVDDLWKTPLTIEDLICYSFQVARGMEFLASRKCIHRDLAARNILLSENNVVKICDFGLARDIYKDPDYVRKGNARLPLKWMAPESIFDKVYTSQSDVWSFGVLLWEIFSLGASPYPGIQIDEDFCKRLKDGTRMRAPDNASPEIYGIMLACWQGEPRERPTFPALVEILGDLLQENSLPEIPFNVSQSSEDDGFSQASSRPPSQEEIRLACNTLPTRYYNCVPFAGCVMVGPSSTCHSRVKTFEELPMEMTSHKTQHDSQTDSGMVLASDELERFEHKHRGAMLTTATTGQSTDRLISCPSVSSSGSGGGLLRPVFFTQLSGQTFYNNEYGHLSEEGVSDYFSSSDQAV.

Positions 1 to 24 (MKRDFTFFCRIWIGIPFFSGLVNG) are cleaved as a signal peptide. 7 consecutive Ig-like C2-type domains span residues 25–121 (FSMS…YYRC), 138–244 (IFVF…VQVI), 255–343 (PEDS…RELT), 352–442 (PFIS…LNFT), 453–583 (EKEA…TTIP), 583–690 (PEGF…HRKY), and 699–785 (PRYR…ATVS). Residues 25-796 (FSMSPPTLDN…IGSDDKTNVE (772 aa)) are Extracellular-facing. Residues asparagine 44, asparagine 48, asparagine 114, asparagine 216, and asparagine 271 are each glycosylated (N-linked (GlcNAc...) asparagine). Intrachain disulfides connect cysteine 51–cysteine 121 and cysteine 173–cysteine 225. Cysteine 272 and cysteine 331 are joined by a disulfide. Asparagine 360, asparagine 400, and asparagine 440 each carry an N-linked (GlcNAc...) asparagine glycan. 3 cysteine pairs are disulfide-bonded: cysteine 473–cysteine 562, cysteine 493–cysteine 514, and cysteine 606–cysteine 674. 6 N-linked (GlcNAc...) asparagine glycosylation sites follow: asparagine 553, asparagine 610, asparagine 660, asparagine 707, asparagine 711, and asparagine 751. Cysteine 720 and cysteine 772 form a disulfide bridge. Residues 797–817 (IVILIGTGVIAIFFWVLLLVI) traverse the membrane as a helical segment. Residues 818-1357 (FCNVKRVNPA…DYFSSSDQAV (540 aa)) are Cytoplasmic-facing. Residues 866–1181 (LRLGKVLGHG…ALVEILGDLL (316 aa)) form the Protein kinase domain. Residues 872–880 (LGHGAFGKV) and lysine 900 contribute to the ATP site. The disordered stretch occupies residues 978–1007 (QSQVRRMIEAGQASQSEHQPSTSSTNPPRV). Residues 989–1005 (QASQSEHQPSTSSTNPP) are compositionally biased toward polar residues. The active-site Proton acceptor is the aspartate 1045. Residues tyrosine 1071 and tyrosine 1076 each carry the phosphotyrosine; by autocatalysis modification. The disordered stretch occupies residues 1192–1212 (NVSQSSEDDGFSQASSRPPSQ). Residues tyrosine 1226, tyrosine 1227, tyrosine 1334, and tyrosine 1338 each carry the phosphotyrosine; by autocatalysis modification.

This sequence belongs to the protein kinase superfamily. Tyr protein kinase family. CSF-1/PDGF receptor subfamily. In terms of assembly, interacts with vegfc and vegfd. Monomer in the absence of bound vegfc or vegfd. Homodimer in the presence of bound vegfc or vegfd. Post-translationally, autophosphorylated on tyrosine residues upon ligand binding. Autophosphorylation occurs in trans, i.e. one subunit of the dimeric receptor phosphorylates tyrosine residues on the other subunit.

Its subcellular location is the cell membrane. It is found in the cytoplasm. It localises to the nucleus. The catalysed reaction is L-tyrosyl-[protein] + ATP = O-phospho-L-tyrosyl-[protein] + ADP + H(+). Present in an inactive conformation in the absence of bound ligand. Binding of vegfc or vegfd leads to dimerization and activation by autophosphorylation on tyrosine residues. Tyrosine-protein kinase that acts as a cell-surface receptor for vegf or vegfc. Combinations of multiple VEGF receptors are required for development of different blood vessel types in the embryo. Involved in angiogenesis, specifically in VEGF-induced sprouting of new blood vessels, but not required for proper vasculogenesis or hematopoiesis. The protein is Vascular endothelial growth factor receptor 3 (flt4) of Danio rerio (Zebrafish).